Consider the following 170-residue polypeptide: Small ribosomal subunit protein uS3mB (170 aa).

The N-terminal 30 residues, 1-30, are a transit peptide targeting the mitochondrion; the sequence is MAAPVMSAFGRLQGLIRTERSLLTHVQSRC.

This sequence belongs to the universal ribosomal protein uS3 family. Component of the mitochondrial ribosome small subunit (28S) which comprises a 12S rRNA and about 30 distinct proteins.

The protein resides in the mitochondrion. This is Small ribosomal subunit protein uS3mB (mrps24-b) from Xenopus laevis (African clawed frog).